Here is a 432-residue protein sequence, read N- to C-terminus: D-amino acid dehydrogenase (432 aa).

3–17 (VLVLGSGVVGTASAY) contacts FAD.

The protein belongs to the DadA oxidoreductase family. Requires FAD as cofactor.

It carries out the reaction a D-alpha-amino acid + A + H2O = a 2-oxocarboxylate + AH2 + NH4(+). Its pathway is amino-acid degradation; D-alanine degradation; NH(3) and pyruvate from D-alanine: step 1/1. In terms of biological role, oxidative deamination of D-amino acids. This chain is D-amino acid dehydrogenase, found in Stutzerimonas stutzeri (strain A1501) (Pseudomonas stutzeri).